The primary structure comprises 95 residues: Sec-independent protein translocase protein TatA (95 aa).

The chain crosses the membrane as a helical span at residues 1 to 21; that stretch reads MGGISIWQLLIIALIVVLLFG. Basic and acidic residues predominate over residues 50–61; it reads KALEDNAADKPA. The interval 50–95 is disordered; the sequence is KALEDNAADKPAADAAKVTETAKVAETAPVAETAEKKAESKGKEQA. Positions 62–81 are enriched in low complexity; the sequence is ADAAKVTETAKVAETAPVAE. Residues 82-95 are compositionally biased toward basic and acidic residues; it reads TAEKKAESKGKEQA.

This sequence belongs to the TatA/E family. As to quaternary structure, the Tat system comprises two distinct complexes: a TatABC complex, containing multiple copies of TatA, TatB and TatC subunits, and a separate TatA complex, containing only TatA subunits. Substrates initially bind to the TatABC complex, which probably triggers association of the separate TatA complex to form the active translocon.

The protein localises to the cell inner membrane. In terms of biological role, part of the twin-arginine translocation (Tat) system that transports large folded proteins containing a characteristic twin-arginine motif in their signal peptide across membranes. TatA could form the protein-conducting channel of the Tat system. The protein is Sec-independent protein translocase protein TatA of Shewanella halifaxensis (strain HAW-EB4).